We begin with the raw amino-acid sequence, 340 residues long: tRNA N6-adenosine threonylcarbamoyltransferase (340 aa).

Residues H113 and H117 each contribute to the Fe cation site. Residues 135-139 (LVSGG), D169, G182, D186, and N274 each bind substrate. D302 contacts Fe cation.

This sequence belongs to the KAE1 / TsaD family. The cofactor is Fe(2+).

It localises to the cytoplasm. The enzyme catalyses L-threonylcarbamoyladenylate + adenosine(37) in tRNA = N(6)-L-threonylcarbamoyladenosine(37) in tRNA + AMP + H(+). Its function is as follows. Required for the formation of a threonylcarbamoyl group on adenosine at position 37 (t(6)A37) in tRNAs that read codons beginning with adenine. Is involved in the transfer of the threonylcarbamoyl moiety of threonylcarbamoyl-AMP (TC-AMP) to the N6 group of A37, together with TsaE and TsaB. TsaD likely plays a direct catalytic role in this reaction. The sequence is that of tRNA N6-adenosine threonylcarbamoyltransferase from Mycolicibacterium vanbaalenii (strain DSM 7251 / JCM 13017 / BCRC 16820 / KCTC 9966 / NRRL B-24157 / PYR-1) (Mycobacterium vanbaalenii).